Consider the following 328-residue polypeptide: Protoheme IX farnesyltransferase (328 aa).

The next 8 helical transmembrane spans lie at 31–51 (IILL…KGEV), 53–73 (LFLL…ANAI), 120–140 (VFAN…YVGV), 153–173 (IVIG…AVTG), 181–201 (LLFA…AIYI), 226–246 (IWVY…PLHV), 250–270 (IYAV…WQLL), and 285–305 (YSIY…LPFT).

The protein belongs to the UbiA prenyltransferase family. Protoheme IX farnesyltransferase subfamily.

Its subcellular location is the cell inner membrane. It catalyses the reaction heme b + (2E,6E)-farnesyl diphosphate + H2O = Fe(II)-heme o + diphosphate. Its pathway is porphyrin-containing compound metabolism; heme O biosynthesis; heme O from protoheme: step 1/1. In terms of biological role, converts heme B (protoheme IX) to heme O by substitution of the vinyl group on carbon 2 of heme B porphyrin ring with a hydroxyethyl farnesyl side group. This is Protoheme IX farnesyltransferase from Trichodesmium erythraeum (strain IMS101).